The sequence spans 303 residues: Oxygen-dependent coproporphyrinogen-III oxidase (303 aa).

S93 lines the substrate pocket. A divalent metal cation is bound by residues H97 and H107. H107 acts as the Proton donor in catalysis. Substrate is bound at residue 109-111 (NIR). Residues H146 and H176 each contribute to the a divalent metal cation site. The interval 241–276 (YVEFNLLLDRGTLFGIQSNGRIESILSSMPPLVKWE) is important for dimerization.

It belongs to the aerobic coproporphyrinogen-III oxidase family. Homodimer. It depends on a divalent metal cation as a cofactor.

It localises to the cytoplasm. It carries out the reaction coproporphyrinogen III + O2 + 2 H(+) = protoporphyrinogen IX + 2 CO2 + 2 H2O. Its pathway is porphyrin-containing compound metabolism; protoporphyrin-IX biosynthesis; protoporphyrinogen-IX from coproporphyrinogen-III (O2 route): step 1/1. In terms of biological role, involved in the heme biosynthesis. Catalyzes the aerobic oxidative decarboxylation of propionate groups of rings A and B of coproporphyrinogen-III to yield the vinyl groups in protoporphyrinogen-IX. The chain is Oxygen-dependent coproporphyrinogen-III oxidase from Wigglesworthia glossinidia brevipalpis.